A 156-amino-acid chain; its full sequence is Ribosomal RNA large subunit methyltransferase H (156 aa).

Residues Leu73, Gly104, and 123-128 (ISSMTL) each bind S-adenosyl-L-methionine.

The protein belongs to the RNA methyltransferase RlmH family. Homodimer.

It is found in the cytoplasm. The catalysed reaction is pseudouridine(1915) in 23S rRNA + S-adenosyl-L-methionine = N(3)-methylpseudouridine(1915) in 23S rRNA + S-adenosyl-L-homocysteine + H(+). Specifically methylates the pseudouridine at position 1915 (m3Psi1915) in 23S rRNA. The protein is Ribosomal RNA large subunit methyltransferase H of Burkholderia cenocepacia (strain ATCC BAA-245 / DSM 16553 / LMG 16656 / NCTC 13227 / J2315 / CF5610) (Burkholderia cepacia (strain J2315)).